A 716-amino-acid chain; its full sequence is Epidermal growth factor receptor kinase substrate 8-like protein 2 (716 aa).

Disordered stretches follow at residues 1–25 (MSQS…DGVA) and 182–243 (PQTL…SQEE). Residues 46–202 (MHETSQYHVQ…RQRQSILPPP (157 aa)) form the PID domain. Pro residues predominate over residues 199-208 (LPPPQGPAPI). Residues 234–243 (GFRRRESQEE) show a composition bias toward basic and acidic residues. Serine 240 bears the Phosphoserine mark. Phosphothreonine is present on threonine 304. Positions 449-488 (VSPVSRQSIRNSQKHSPTSEPTPPGDALPPVSSPHTHRGY) are disordered. Serine 450 bears the Phosphoserine mark. The segment covering 452-467 (VSRQSIRNSQKHSPTS) has biased composition (polar residues). Position 470 is a phosphothreonine (threonine 470). The 60-residue stretch at 493–552 (AMAKYVKILYDFTARNANELSVLKDEVLEVLEDGRQWWKLRSRSGQAGYVPCNILGEARP) folds into the SH3 domain. Position 571 is a phosphoserine (serine 571).

It belongs to the EPS8 family. Interacts with ABI1. Part of a complex that contains SOS1, ABI1 and EPS8L2. Associates with F-actin.

It localises to the cytoplasm. Its subcellular location is the cell projection. It is found in the stereocilium. Functionally, stimulates guanine exchange activity of SOS1. May play a role in membrane ruffling and remodeling of the actin cytoskeleton. In the cochlea, is required for stereocilia maintenance in adult hair cells. This chain is Epidermal growth factor receptor kinase substrate 8-like protein 2 (EPS8L2), found in Pongo abelii (Sumatran orangutan).